The sequence spans 340 residues: Protein RecA (340 aa).

An ATP-binding site is contributed by 65–72 (GPESGGKT).

It belongs to the RecA family.

It localises to the cytoplasm. Can catalyze the hydrolysis of ATP in the presence of single-stranded DNA, the ATP-dependent uptake of single-stranded DNA by duplex DNA, and the ATP-dependent hybridization of homologous single-stranded DNAs. It interacts with LexA causing its activation and leading to its autocatalytic cleavage. In Thermus aquaticus, this protein is Protein RecA.